The following is a 75-amino-acid chain: Sec-independent protein translocase protein TatA (75 aa).

The chain crosses the membrane as a helical span at residues 1 to 21 (MGGISIWQLLIIVAIIVLLFG). A disordered region spans residues 50–75 (DAEFKSLNKDESATAGSEKVKDKEQA).

This sequence belongs to the TatA/E family. As to quaternary structure, the Tat system comprises two distinct complexes: a TatABC complex, containing multiple copies of TatA, TatB and TatC subunits, and a separate TatA complex, containing only TatA subunits. Substrates initially bind to the TatABC complex, which probably triggers association of the separate TatA complex to form the active translocon.

Its subcellular location is the cell inner membrane. Functionally, part of the twin-arginine translocation (Tat) system that transports large folded proteins containing a characteristic twin-arginine motif in their signal peptide across membranes. TatA could form the protein-conducting channel of the Tat system. This chain is Sec-independent protein translocase protein TatA, found in Mannheimia succiniciproducens (strain KCTC 0769BP / MBEL55E).